Reading from the N-terminus, the 1178-residue chain is Thrombospondin-2 (1178 aa).

Positions 1–22 (MLQRSRLLWLAVFITLWVSSDA) are cleaved as a signal peptide. The Laminin G-like domain occupies 25–221 (DAKEEENTFD…LQNIHLIFDT (197 aa)). N-linked (GlcNAc...) asparagine glycans are attached at residues Asn-157, Asn-244, Asn-317, and Asn-322. The VWFC domain maps to 324-381 (SVCWQDGRVFADSESWIVDSCTKCTCQDSKIVCHQITCPPVSCADPSFIEGECCPVCS). 3 consecutive TSP type-1 domains span residues 387 to 437 (EEGW…KKCD), 443 to 498 (DGGW…APCP), and 500 to 555 (NGQW…RDCP). Intrachain disulfides connect Cys-399–Cys-431, Cys-403–Cys-436, Cys-414–Cys-421, Cys-455–Cys-492, Cys-459–Cys-497, Cys-470–Cys-482, Cys-512–Cys-549, Cys-516–Cys-554, Cys-527–Cys-539, Cys-559–Cys-570, Cys-564–Cys-580, Cys-583–Cys-594, Cys-600–Cys-616, Cys-607–Cys-625, Cys-628–Cys-652, Cys-658–Cys-671, Cys-665–Cys-684, Cys-686–Cys-697, Cys-713–Cys-721, Cys-726–Cys-746, Cys-762–Cys-782, Cys-785–Cys-805, Cys-821–Cys-841, Cys-844–Cys-864, Cys-882–Cys-902, Cys-918–Cys-938, and Cys-954–Cys-1175. Asn-463 carries an N-linked (GlcNAc...) asparagine glycan. The EGF-like 1 domain occupies 555-595 (PIDGCLSNPCFPGAECNSYPDGSWSCGPCPAGFLGNGTVCE). Asn-590 is a glycosylation site (N-linked (GlcNAc...) asparagine). In terms of domain architecture, EGF-like 2 spans 654–698 (PENPCKDKTHSCHKSAECIYLGHFSDPMYKCECRTGYAGDGRICG). TSP type-3 repeat units lie at residues 699–734 (EDSDLDGWPNNNLVCAANATYHCVKDNCPLLPNSGQ), 735–770 (EDFDKDGKGDACDEDDDNDGVEDDKDNCPLLFNPRQ), 771–793 (FDYDKDEVGDRCDNCPYVHNPAQ), 794–829 (IDTDNNGEGDSCAVDIDGDDIFNERDNCPYVYNTDQ), 830–852 (SDTDGDGVGDQCDNCPLMHNPDQ), 853–890 (TDADNDLVGDQCDNNEDIDEDGHQNNQDNCPYIPNANQ), 891–926 (ADHDKDGKGDACDPDDDNDGIPDDRDNCRLRYNPEQ), and 927–962 (EDSDGDGRGDICKDDFDDDNVPDIFDVCPENNAISE). An N-linked (GlcNAc...) asparagine glycan is attached at Asn-716. Residues 737–760 (FDKDGKGDACDEDDDNDGVEDDKD) are disordered. Positions 746 to 759 (CDEDDDNDGVEDDK) are enriched in acidic residues. The interval 852–941 (QTDADNDLVG…DGRGDICKDD (90 aa)) is disordered. Over residues 853 to 872 (TDADNDLVGDQCDNNEDIDE) the composition is skewed to acidic residues. A compositionally biased stretch (basic and acidic residues) spans 891-901 (ADHDKDGKGDA). The segment covering 902–911 (CDPDDDNDGI) has biased composition (acidic residues). Basic and acidic residues-rich tracts occupy residues 912 to 924 (PDDRDNCRLRYNP) and 931 to 940 (GDGRGDICKD). The Cell attachment site signature appears at 934 to 936 (RGD). Residues 966-1178 (RKFQMVPLDP…SDLKYECRDA (213 aa)) form the TSP C-terminal domain. An N-linked (GlcNAc...) asparagine glycan is attached at Asn-1075.

The protein belongs to the thrombospondin family. As to quaternary structure, homotrimer; disulfide-linked. Can bind to fibrinogen, fibronectin, laminin and type V collagen.

Its function is as follows. Adhesive glycoprotein that mediates cell-to-cell and cell-to-matrix interactions. This Gallus gallus (Chicken) protein is Thrombospondin-2 (THBS2).